The sequence spans 619 residues: DEAD-box ATP-dependent RNA helicase 14 (619 aa).

At Ala-2 the chain carries N-acetylalanine. The 35-residue stretch at 17-51 (HTLPKPWKGLIDDRTGYLYFWNPETNVTQYEKPTP) folds into the WW domain. Positions 47 to 139 (EKPTPSLPPK…APASELSPEA (93 aa)) are disordered. A compositionally biased stretch (low complexity) spans 61–71 (VSVSSSVQVQQ). Positions 78–93 (PKDDDKYSRGSERVSR) are enriched in basic and acidic residues. Low complexity predominate over residues 125-139 (PLPSSAPASELSPEA). Position 136 is a phosphoserine (Ser-136). Positions 158–186 (MSFEATGFPPELLREVLSAGFSAPTPIQA) match the Q motif motif. Residues 189-363 (WPIAMQGRDI…ADLLVNPAQV (175 aa)) enclose the Helicase ATP-binding domain. 202-209 (AKTGSGKT) lines the ATP pocket. Residues 311–314 (DEAD) carry the DEAD box motif. The Helicase C-terminal domain occupies 392-536 (RLEQILRSQE…RVPPQIREMA (145 aa)). The segment at 528-619 (VPPQIREMAT…FHETMMMKHR (92 aa)) is disordered. Residues 552–568 (PSGGRGRGGDSGYGGRG) show a composition bias toward gly residues. 2 stretches are compositionally biased toward basic and acidic residues: residues 582 to 595 (GRER…ERFN) and 609 to 619 (SFHETMMMKHR).

It belongs to the DEAD box helicase family. DDX5/DBP2 subfamily. As to expression, ubiquitous. Preferentially expressed in flowers and roots.

Its subcellular location is the nucleus. It carries out the reaction ATP + H2O = ADP + phosphate + H(+). Functionally, ATP-dependent RNA helicase involved nonsense-mediated mRNA decay and ribosome biogenesis through rRNA processing. The chain is DEAD-box ATP-dependent RNA helicase 14 (RH14) from Arabidopsis thaliana (Mouse-ear cress).